A 315-amino-acid polypeptide reads, in one-letter code: Glycine--tRNA ligase alpha subunit (315 aa).

Belongs to the class-II aminoacyl-tRNA synthetase family. In terms of assembly, tetramer of two alpha and two beta subunits.

It localises to the cytoplasm. It carries out the reaction tRNA(Gly) + glycine + ATP = glycyl-tRNA(Gly) + AMP + diphosphate. The sequence is that of Glycine--tRNA ligase alpha subunit from Sorangium cellulosum (strain So ce56) (Polyangium cellulosum (strain So ce56)).